We begin with the raw amino-acid sequence, 180 residues long: Cytidylate kinase 2 (180 aa).

Residue 7 to 15 (GKSGCGNTT) coordinates ATP.

This sequence belongs to the cytidylate kinase family. Type 2 subfamily.

Its subcellular location is the cytoplasm. It carries out the reaction CMP + ATP = CDP + ADP. The catalysed reaction is dCMP + ATP = dCDP + ADP. The polypeptide is Cytidylate kinase 2 (cmk2) (Borreliella burgdorferi (strain ATCC 35210 / DSM 4680 / CIP 102532 / B31) (Borrelia burgdorferi)).